A 344-amino-acid chain; its full sequence is Follistatin (344 aa).

A signal peptide spans 1 to 29; it reads MARPRHQPGGLCLLLLLLCQFMEDRSAQA. Positions 30 to 103 constitute a TB domain; that stretch reads GNCWLRQAKN…TCENVDCGPG (74 aa). 18 disulfide bridges follow: Cys32–Cys55, Cys42–Cys88, Cys56–Cys91, Cys95–Cys106, Cys100–Cys116, Cys118–Cys150, Cys122–Cys143, Cys132–Cys164, Cys168–Cys179, Cys173–Cys189, Cys192–Cys225, Cys196–Cys218, Cys207–Cys239, Cys245–Cys256, Cys250–Cys267, Cys270–Cys302, Cys274–Cys295, and Cys284–Cys316. The 24-residue stretch at 94–117 folds into the Follistatin-like 1 domain; the sequence is TCENVDCGPGKKCRMNKKNKPRCV. One can recognise a Kazal-like 1 domain in the interval 112–166; the sequence is NKPRCVCAPDCSNITWKGLVCGLDGKTYRNECALLKARCKEQPELQVQYQGKCKK. Residue Asn124 is glycosylated (N-linked (GlcNAc...) asparagine). A Follistatin-like 2 domain is found at 167-190; it reads TCRDVFCPGSSTCVVDQTNNAYCV. A Kazal-like 2 domain is found at 186-241; that stretch reads NAYCVTCNRICPEPTSSEQYLCGNDGVTYPSACHLRKATCLLGRSIGLAYEGKCIK. The Follistatin-like 3 domain occupies 244-268; it reads SCDDIQCTGGKKCLWDFKVGRGRCS. Residues 261–318 enclose the Kazal-like 3 domain; the sequence is KVGRGRCSLCGELCPESKSEEPVCASDNATYASECAMKEAACSSGVLLEVKHSGSCNS. An N-linked (GlcNAc...) asparagine glycan is attached at Asn288. Positions 316-344 are disordered; it reads CNSISEDTEDEEEDEDQDYSFPISSILEW. Residues 321 to 333 show a composition bias toward acidic residues; sequence EDTEDEEEDEDQD.

Monomer.

The protein resides in the secreted. Its function is as follows. Binds directly to activin and functions as an activin antagonist. Specific inhibitor of the biosynthesis and secretion of pituitary follicle stimulating hormone (FSH). In Bubalus bubalis (Domestic water buffalo), this protein is Follistatin.